A 316-amino-acid polypeptide reads, in one-letter code: 4-hydroxy-3-methylbut-2-enyl diphosphate reductase (316 aa).

Cys12 contributes to the [4Fe-4S] cluster binding site. Residues His41 and His74 each contribute to the (2E)-4-hydroxy-3-methylbut-2-enyl diphosphate site. The dimethylallyl diphosphate site is built by His41 and His74. Residues His41 and His74 each contribute to the isopentenyl diphosphate site. Cys96 lines the [4Fe-4S] cluster pocket. His124 is a (2E)-4-hydroxy-3-methylbut-2-enyl diphosphate binding site. Position 124 (His124) interacts with dimethylallyl diphosphate. Isopentenyl diphosphate is bound at residue His124. Glu126 (proton donor) is an active-site residue. Thr165 is a (2E)-4-hydroxy-3-methylbut-2-enyl diphosphate binding site. Cys195 is a [4Fe-4S] cluster binding site. (2E)-4-hydroxy-3-methylbut-2-enyl diphosphate-binding residues include Ser223, Ser224, Asn225, and Ser267. Positions 223, 224, 225, and 267 each coordinate dimethylallyl diphosphate. Positions 223, 224, 225, and 267 each coordinate isopentenyl diphosphate.

Belongs to the IspH family. [4Fe-4S] cluster serves as cofactor.

It carries out the reaction isopentenyl diphosphate + 2 oxidized [2Fe-2S]-[ferredoxin] + H2O = (2E)-4-hydroxy-3-methylbut-2-enyl diphosphate + 2 reduced [2Fe-2S]-[ferredoxin] + 2 H(+). The enzyme catalyses dimethylallyl diphosphate + 2 oxidized [2Fe-2S]-[ferredoxin] + H2O = (2E)-4-hydroxy-3-methylbut-2-enyl diphosphate + 2 reduced [2Fe-2S]-[ferredoxin] + 2 H(+). The protein operates within isoprenoid biosynthesis; dimethylallyl diphosphate biosynthesis; dimethylallyl diphosphate from (2E)-4-hydroxy-3-methylbutenyl diphosphate: step 1/1. Its pathway is isoprenoid biosynthesis; isopentenyl diphosphate biosynthesis via DXP pathway; isopentenyl diphosphate from 1-deoxy-D-xylulose 5-phosphate: step 6/6. Catalyzes the conversion of 1-hydroxy-2-methyl-2-(E)-butenyl 4-diphosphate (HMBPP) into a mixture of isopentenyl diphosphate (IPP) and dimethylallyl diphosphate (DMAPP). Acts in the terminal step of the DOXP/MEP pathway for isoprenoid precursor biosynthesis. This Acidithiobacillus ferrooxidans (strain ATCC 53993 / BNL-5-31) (Leptospirillum ferrooxidans (ATCC 53993)) protein is 4-hydroxy-3-methylbut-2-enyl diphosphate reductase.